Consider the following 91-residue polypeptide: Acylphosphatase (91 aa).

Residues 3 to 90 enclose the Acylphosphatase-like domain; the sequence is RVSMIVSGQV…CGYSIFTIRR (88 aa). Residues arginine 18 and asparagine 36 contribute to the active site.

It belongs to the acylphosphatase family.

The catalysed reaction is an acyl phosphate + H2O = a carboxylate + phosphate + H(+). This is Acylphosphatase (acyP) from Methanospirillum hungatei JF-1 (strain ATCC 27890 / DSM 864 / NBRC 100397 / JF-1).